The sequence spans 355 residues: UPF0421 protein BCE33L2478 (355 aa).

A run of 4 helical transmembrane segments spans residues 19-39, 74-94, 109-129, and 131-151; these read IAVF…IFAV, FTFF…FTIV, TLTA…AFLI, and LATT…ILPP.

It belongs to the UPF0421 family.

It localises to the cell membrane. The sequence is that of UPF0421 protein BCE33L2478 from Bacillus cereus (strain ZK / E33L).